The chain runs to 334 residues: NAC domain-containing protein 66 (334 aa).

An NAC domain is found at 11–175; sequence VPPGFRFHPT…GWVVCRVFKK (165 aa). Residues 111–181 mediate DNA binding; that stretch reads IGMRKTLVFY…VFKKNNLCKN (71 aa).

As to expression, mostly expressed in anthers. Also present in pollen, base of siliques and inflorescence stems.

It localises to the nucleus. Functionally, transcription activator of genes involved in biosynthesis of secondary walls. Together with NST1, required for the secondary cell wall thickening of the anther endocethium, which is necessary for anther dehiscence. May also regulate the secondary cell wall lignification of other tissues such as tracheary elements. The protein is NAC domain-containing protein 66 (NAC066) of Arabidopsis thaliana (Mouse-ear cress).